Consider the following 449-residue polypeptide: MKSYEVNFDGLVGPTHNYGGLSYGNVASQSNSQQASNPREAARQGLAKMKALADMGFKQGVLAPQERPDVAALRRLGFSGSDAEVIQRAAREAMPLLVASCSASSMWVANAATVSPSADTADGRVHFTAANLNCKYHRSIEHPTTSRVLGAMFNDEKYFAHHAALPAVAQFGDEGAANHTRFCRAYGEAGVEFFVYGRSAFDSRYPAPQKYPARQTLEASQAVARLHGLSDDGVVYAQQNPAVIDQGVFHNDVISVGNGEVLFYHEDAFLETDAVLGQLRAKLASKGGNFQAICVPRAAVAVEDAVRSYLFNSQLLSREDGSMLLVVPEECRNNERVWAYLGQLTSQGGPVKEVKVFDLKQSMQNGGGPACLRLRVALKEAELAAVNQGVIMTATLYDTLLQWVDRHYRDRLGEADLADPQLLVECRTALDELTQILKLGSVYPFQRQP.

Substrate is bound by residues 19–28 (GGLSYGNVAS), Asn110, and 137–138 (HR). Positions 23–43 (YGNVASQSNSQQASNPREAAR) are disordered. Residues 27–37 (ASQSNSQQASN) are compositionally biased toward low complexity. Residue Glu174 is part of the active site. A substrate-binding site is contributed by Arg214. The active site involves His250. Residues Asp252 and Asn365 each coordinate substrate. The active-site Nucleophile is Cys371.

Belongs to the succinylarginine dihydrolase family. In terms of assembly, homodimer.

It carries out the reaction N(2)-succinyl-L-arginine + 2 H2O + 2 H(+) = N(2)-succinyl-L-ornithine + 2 NH4(+) + CO2. Its pathway is amino-acid degradation; L-arginine degradation via AST pathway; L-glutamate and succinate from L-arginine: step 2/5. Its function is as follows. Catalyzes the hydrolysis of N(2)-succinylarginine into N(2)-succinylornithine, ammonia and CO(2). The sequence is that of N-succinylarginine dihydrolase from Pseudomonas putida (strain ATCC 47054 / DSM 6125 / CFBP 8728 / NCIMB 11950 / KT2440).